Reading from the N-terminus, the 212-residue chain is Small ribosomal subunit protein uS3 (212 aa).

Residues 38 to 106 enclose the KH type-2 domain; that stretch reads IRKFVKKTLY…EFAIEVNEIR (69 aa).

The protein belongs to the universal ribosomal protein uS3 family. Part of the 30S ribosomal subunit. Forms a tight complex with proteins S10 and S14.

Functionally, binds the lower part of the 30S subunit head. Binds mRNA in the 70S ribosome, positioning it for translation. The polypeptide is Small ribosomal subunit protein uS3 (Nitratidesulfovibrio vulgaris (strain ATCC 29579 / DSM 644 / CCUG 34227 / NCIMB 8303 / VKM B-1760 / Hildenborough) (Desulfovibrio vulgaris)).